The chain runs to 379 residues: Type II methyltransferase M.CvrRI (379 aa).

It belongs to the N(4)/N(6)-methyltransferase family.

The catalysed reaction is a 2'-deoxyadenosine in DNA + S-adenosyl-L-methionine = an N(6)-methyl-2'-deoxyadenosine in DNA + S-adenosyl-L-homocysteine + H(+). In terms of biological role, a gamma subtype methylase, recognizes the double-stranded sequence 5'-TGCA-3', methylates A-4 on both strands, and protects the DNA from cleavage by the CviRI endonuclease. This chain is Type II methyltransferase M.CvrRI (CVIRIM), found in Chlorella (PBCV-XZ-6E).